We begin with the raw amino-acid sequence, 728 residues long: Polyribonucleotide nucleotidyltransferase (728 aa).

Mg(2+)-binding residues include Asp-513 and Asp-519. The KH domain occupies 580–640; that stretch reads PKVKMILIKP…EIVDLTVTYI (61 aa). The S1 motif domain maps to 650–724; that stretch reads ENVYEVKILR…ERGQIDLSKK (75 aa).

It belongs to the polyribonucleotide nucleotidyltransferase family. Mg(2+) serves as cofactor.

Its subcellular location is the cytoplasm. It carries out the reaction RNA(n+1) + phosphate = RNA(n) + a ribonucleoside 5'-diphosphate. Functionally, involved in mRNA degradation. Catalyzes the phosphorolysis of single-stranded polyribonucleotides processively in the 3'- to 5'-direction. This chain is Polyribonucleotide nucleotidyltransferase, found in Phytoplasma mali (strain AT).